We begin with the raw amino-acid sequence, 1664 residues long: DNA-directed RNA polymerase I subunit RPA190 (1664 aa).

The Zn(2+) site is built by Cys62, Cys65, Cys72, His75, Cys102, Cys105, Cys233, and Cys236. The interval 280 to 310 (QAKKLDGSNEASANDEESFDVGRNPTTRPKT) is disordered. Mg(2+) contacts are provided by Asp627, Asp629, and Asp631. At Ser889 the chain carries Phosphoserine. The segment at 992-1004 (PQEYYFHCMAGRE) is bridging helix. Residues 1343-1423 (DIGVAVPRLQ…DSDSEDEDVD (81 aa)) form a disordered region. Residues 1393 to 1414 (ETMREAEKSSDEEGIDSDKESD) are compositionally biased toward basic and acidic residues. A Phosphoserine modification is found at Ser1636.

The protein belongs to the RNA polymerase beta' chain family. Component of the RNA polymerase I (Pol I) complex consisting of 14 subunits: RPA135, RPA190, RPC40, RPA14, RPB5, RPO26, RPA43, RPB8, RPA12, RPB10, RPC19, RPC10, RPA49 and RPA34. The complex is composed of a horseshoe-shaped core containing ten subunits (RPA135, RPA190, RPB5, RPO26, RPB8, RPB10, RPC10, RPA12, RPC19 and RPC40) where RPA135 and RPA190 form the DNA-binding cleft. Outside of the core, RPA14 and RPA43 form the stalk that mediates interactions with transcription initiation factors and newly synthesized RNA.

The protein resides in the nucleus. Its subcellular location is the nucleolus. It catalyses the reaction RNA(n) + a ribonucleoside 5'-triphosphate = RNA(n+1) + diphosphate. In terms of biological role, DNA-dependent RNA polymerases catalyze the transcription of DNA into RNA using the four ribonucleoside triphosphates as substrates. Component of RNA polymerase I (Pol I) which synthesizes ribosomal RNA precursors. Besides, RNA polymerase I has intrinsic RNA cleavage activity. RPA190 and RPA135 both contribute to the polymerase catalytic activity and together form the Pol I active center. In addition, subunit RPA12 contributes a catalytic zinc ribbon that is required for RNA cleavage by Pol I. A single stranded DNA template strand of the promoter is positioned within the central active site cleft of Pol I. A bridging helix emanates from RPA190 and crosses the cleft near the catalytic site and is thought to promote translocation of Pol I by acting as a ratchet that moves the RNA-DNA hybrid through the active site by switching from straight to bent conformations at each step of nucleotide addition. The sequence is that of DNA-directed RNA polymerase I subunit RPA190 (RPA190) from Saccharomyces cerevisiae (strain ATCC 204508 / S288c) (Baker's yeast).